The chain runs to 653 residues: UvrABC system protein C (653 aa).

A GIY-YIG domain is found at Asn-44–Val-122. Residues Ser-232–Val-267 enclose the UVR domain.

It belongs to the UvrC family. As to quaternary structure, interacts with UvrB in an incision complex.

The protein localises to the cytoplasm. Its function is as follows. The UvrABC repair system catalyzes the recognition and processing of DNA lesions. UvrC both incises the 5' and 3' sides of the lesion. The N-terminal half is responsible for the 3' incision and the C-terminal half is responsible for the 5' incision. This chain is UvrABC system protein C, found in Chelativorans sp. (strain BNC1).